The sequence spans 384 residues: 5-cytosine rRNA methyltransferase NSUN4 (384 aa).

Residues 1 to 25 (MAALVVRGVRDMLKRADFATVPRRQ) constitute a mitochondrion transit peptide. Positions 185, 186, 187, and 204 each coordinate S-adenosyl-L-methionine. Ser-206 is modified (phosphoserine). Arg-209, Asp-237, Gly-238, and Asp-255 together coordinate S-adenosyl-L-methionine. The active-site Nucleophile is Cys-310.

The protein belongs to the class I-like SAM-binding methyltransferase superfamily. RsmB/NOP family. As to quaternary structure, heterodimer with MTERFD2/MTERF4; this interaction seems to be required for NSUN4 recruitment to the mitochondrial large ribosomal subunit.

Its subcellular location is the mitochondrion. It carries out the reaction a cytidine in rRNA + S-adenosyl-L-methionine = a 5-methylcytidine in rRNA + S-adenosyl-L-homocysteine + H(+). It catalyses the reaction a cytidine in mRNA + S-adenosyl-L-methionine = a 5-methylcytidine in mRNA + S-adenosyl-L-homocysteine + H(+). In terms of biological role, mitochondrial RNA cytosine C(5)-methyltransferase that methylates cytosine to 5-methylcytosine (m5C) in various RNAs, such as rRNAs, mRNAs and some long non-coding RNAs (lncRNAs). Involved in mitochondrial ribosome small subunit (SSU) maturation by catalyzing methylation of mitochondrial 12S rRNA; the function is independent of MTERFD2/MTERF4 and assembled mitochondrial ribosome large subunit (LSU). Targeted to LSU by MTERFD2/MTERF4 and probably is involved in a final step in ribosome biogenesis to ensure that SSU and LSU are assembled. In vitro can methylate 16S rRNA of the LSU; the methylation is enhanced by MTERFD/MTERF4. Also acts as a regulator of innate immunity by marking double-stranded mitochondrial RNAs(mt-dsRNAs) generated in response to stress: catalyzes m5C modification on mitochondrial RNAs, such as a mRNAs and lncRNAs, with a preference for the termini of light-strand lncRNAs, promoting their degradation and cytosolic release. Modified light-strand lncRNAs are then recognized by C1QBP reader and recruited to the mitochondrial degradosome complex, which promotes their degradation. This chain is 5-cytosine rRNA methyltransferase NSUN4 (NSUN4), found in Bos taurus (Bovine).